A 168-amino-acid polypeptide reads, in one-letter code: Outer-membrane lipoprotein YfiB (168 aa).

The N-terminal stretch at 1 to 25 (MLPQRLHPSRLLALALFSLVLGLAG) is a signal peptide. Cys26 carries N-palmitoyl cysteine lipidation. Cys26 carries the S-diacylglycerol cysteine lipid modification. The region spanning 53–168 (EGWEFGMSSK…RRVAIIVPAE (116 aa)) is the OmpA-like domain.

It belongs to the outer membrane OOP (TC 1.B.6) superfamily. As to quaternary structure, homodimer. Interacts with YfiR. The YfiB-YfiR complex is a 2:2 heterotetramer.

The protein resides in the cell outer membrane. Its activity is regulated as follows. Both lipid anchor in the outer membrane and peptidoglycan binding are required for full activity. Once activated by certain cell stress, the dimeric YfiB transforms from a compact conformation to a stretched conformation, allowing the periplasmic domain of the membrane-anchored YfiB to penetrate the cell wall and sequester the YfiR dimer. GMP enhances the binding affinity between YfiB and YfiR. In terms of biological role, activates the diguanylate cyclase TpbB/YfiN by sequestering YfiR at the outer membrane, which counteracts the YfiR-mediated repression of TpbB/YfiN at the inner membrane and leads to increased c-di-GMP production. May act as a sensor of envelope stress. Functionally, part of the YfiB-TpbB-YfiR (or yfiBNR) system, encoding a tripartite signaling module that modulates intracellular c-di-GMP levels. The system is a key regulator of the small colony variant (SCV) phenotype, and plays an important role in biofilm formation and in vivo persistence. The c-di-GMP produced by TpbB/YfiN stimulates the production of the Pel and Psl exopolysaccharides, which promotes surface attachment, generates an SCV phenotype and confers resistance against phagocytosis. The chain is Outer-membrane lipoprotein YfiB from Pseudomonas aeruginosa (strain ATCC 15692 / DSM 22644 / CIP 104116 / JCM 14847 / LMG 12228 / 1C / PRS 101 / PAO1).